A 589-amino-acid polypeptide reads, in one-letter code: Probable translation initiation factor IF-2 (589 aa).

Positions 14–229 (LRQPIVCVLG…LAGLAQRFLE (216 aa)) constitute a tr-type G domain. The segment at 23-30 (GHVDHGKT) is G1. 23 to 30 (GHVDHGKT) provides a ligand contact to GTP. Positions 48 to 52 (GITQR) are G2. A G3 region spans residues 84-87 (DTPG). Residues 84–88 (DTPGH) and 138–141 (NKID) contribute to the GTP site. The tract at residues 138–141 (NKID) is G4. A G5 region spans residues 206–208 (SAK).

This sequence belongs to the TRAFAC class translation factor GTPase superfamily. Classic translation factor GTPase family. IF-2 subfamily.

In terms of biological role, function in general translation initiation by promoting the binding of the formylmethionine-tRNA to ribosomes. Seems to function along with eIF-2. This is Probable translation initiation factor IF-2 (infB) from Thermoplasma acidophilum (strain ATCC 25905 / DSM 1728 / JCM 9062 / NBRC 15155 / AMRC-C165).